Here is a 421-residue protein sequence, read N- to C-terminus: MSTISTSTDSKLDNLGLSVTSRRNQILFYLSKALNLAHLLRSDSLQKSFLDALKQSATDSELLHKNLDEIKFLQNEKLNNEKLLEQEQNEANDYRLKVERLEHKISDYVQEINSLNSQLQIQKSNPEKHEDAVSQNRLRGSLDTVSSPSKTHKANKDEKATRLHLIIANLKKALKEKDAEVLNLQSHVSSKESELDRFKIKLETEESNWKVRLQVLESKLATQDRKLRMQKKSTERKSLLVSPRVSSPKLFSPSKQAIMGTRQPNATSGSPLSVTPFLQKTSTSIGLSSSPPQSSPSAQSSQPFSRDKYPHSMTVSPSNARYLKKHLDDTIPSNVSDINHNDHLKIPQSPSSLSPSKIPIRKKRKLKDTVSNCEFTEEDSESSFLLETIQPTKSTLRRSISPLKKRNDEINELKKGFTMKK.

Disordered stretches follow at residues 122–158 (QKSN…NKDE) and 224–316 (DRKL…MTVS). A compositionally biased stretch (polar residues) spans 133 to 149 (VSQNRLRGSLDTVSSPS). A compositionally biased stretch (basic and acidic residues) spans 224–238 (DRKLRMQKKSTERKS). Residues 262–287 (RQPNATSGSPLSVTPFLQKTSTSIGL) show a composition bias toward polar residues. A compositionally biased stretch (low complexity) spans 288–304 (SSSPPQSSPSAQSSQPF).

As to quaternary structure, component of a monopolin-like complex composed of pcs1 and mde4. The complex associates with the kinetochore.

The protein resides in the nucleus. Its subcellular location is the chromosome. It is found in the centromere. The monopolin-like pcs1/mde4 complex is essential for accurate chromosome segregation during mitosis and meiosis II. May clamp together microtubule binding sites on the same kinetochore, preventing merotelic attachment of microtubules. In Schizosaccharomyces pombe (strain 972 / ATCC 24843) (Fission yeast), this protein is Monopolin complex subunit mde4 (mde4).